The chain runs to 159 residues: Phosphopantetheine adenylyltransferase (159 aa).

Threonine 9 is a substrate binding site. ATP-binding positions include 9 to 10 (TF) and histidine 17. Residues lysine 41, leucine 73, and arginine 87 each coordinate substrate. ATP is bound by residues 88–90 (GLR), glutamate 98, and 123–129 (YSFISST).

The protein belongs to the bacterial CoaD family. In terms of assembly, homohexamer. Mg(2+) serves as cofactor.

It is found in the cytoplasm. The catalysed reaction is (R)-4'-phosphopantetheine + ATP + H(+) = 3'-dephospho-CoA + diphosphate. It functions in the pathway cofactor biosynthesis; coenzyme A biosynthesis; CoA from (R)-pantothenate: step 4/5. In terms of biological role, reversibly transfers an adenylyl group from ATP to 4'-phosphopantetheine, yielding dephospho-CoA (dPCoA) and pyrophosphate. This is Phosphopantetheine adenylyltransferase from Pseudomonas fluorescens (strain ATCC BAA-477 / NRRL B-23932 / Pf-5).